The primary structure comprises 267 residues: Kit ligand (267 aa).

The N-terminal stretch at 1 to 25 is a signal peptide; it reads MKKTQTWIITCIYLQLLLFNPLVHT. Residue Gln-26 is modified to Pyrrolidone carboxylic acid. At 26–215 the chain is on the extracellular side; it reads QGICRNRVTD…SNSIEDSSLQ (190 aa). 2 disulfide bridges follow: Cys-29–Cys-114 and Cys-68–Cys-164. Asn-90, Asn-97, Asn-145, and Asn-196 each carry an N-linked (GlcNAc...) asparagine glycan. A helical transmembrane segment spans residues 216–238; it reads WAAVALPAFFSLVIGFAFGALYW. Residues 239–267 are Cytoplasmic-facing; sequence KKKQPNLTRTVENRQINEEDNEISMLQEK.

This sequence belongs to the SCF family. Homodimer, non-covalently linked. Heterotetramer with KIT, binding two KIT molecules; thereby mediates KIT dimerization and subsequent activation by autophosphorylation. A soluble form is produced by proteolytic processing of the extracellular domain.

It is found in the cytoplasm. Its subcellular location is the cytoskeleton. It localises to the cell membrane. The protein resides in the cell projection. The protein localises to the lamellipodium. It is found in the filopodium. Its subcellular location is the secreted. Ligand for the receptor-type protein-tyrosine kinase KIT. Plays an essential role in the regulation of cell survival and proliferation, hematopoiesis, stem cell maintenance, gametogenesis, mast cell development, migration and function, and in melanogenesis. KITLG/SCF binding can activate several signaling pathways. Promotes phosphorylation of PIK3R1, the regulatory subunit of phosphatidylinositol 3-kinase, and subsequent activation of the kinase AKT1. KITLG/SCF and KIT also transmit signals via GRB2 and activation of RAS, RAF1 and the MAP kinases MAPK1/ERK2 and/or MAPK3/ERK1. KITLG/SCF and KIT promote activation of STAT family members STAT1, STAT3 and STAT5. KITLG/SCF and KIT promote activation of PLCG1, leading to the production of the cellular signaling molecules diacylglycerol and inositol 1,4,5-trisphosphate. KITLG/SCF acts synergistically with other cytokines, probably interleukins. The sequence is that of Kit ligand (KITLG) from Ovis aries (Sheep).